Consider the following 117-residue polypeptide: Protein Wnt-6 (117 aa).

The O-palmitoleoyl serine; by PORCN moiety is linked to residue Ser1. Cys83 and Cys98 are oxidised to a cystine. N-linked (GlcNAc...) asparagine glycosylation is present at Asn84.

Belongs to the Wnt family. In terms of processing, palmitoleoylation is required for efficient binding to frizzled receptors. Depalmitoleoylation leads to Wnt signaling pathway inhibition.

The protein resides in the secreted. It is found in the extracellular space. The protein localises to the extracellular matrix. Its function is as follows. Ligand for members of the frizzled family of seven transmembrane receptors. Probable developmental protein. May be a signaling molecule which affects the development of discrete regions of tissues. Is likely to signal over only few cell diameters. This Plethodon jordani (Red-cheeked salamander) protein is Protein Wnt-6 (WNT-6).